We begin with the raw amino-acid sequence, 258 residues long: Imidazole glycerol phosphate synthase subunit HisF (258 aa).

Active-site residues include Asp11 and Asp130.

This sequence belongs to the HisA/HisF family. As to quaternary structure, heterodimer of HisH and HisF.

The protein resides in the cytoplasm. The enzyme catalyses 5-[(5-phospho-1-deoxy-D-ribulos-1-ylimino)methylamino]-1-(5-phospho-beta-D-ribosyl)imidazole-4-carboxamide + L-glutamine = D-erythro-1-(imidazol-4-yl)glycerol 3-phosphate + 5-amino-1-(5-phospho-beta-D-ribosyl)imidazole-4-carboxamide + L-glutamate + H(+). Its pathway is amino-acid biosynthesis; L-histidine biosynthesis; L-histidine from 5-phospho-alpha-D-ribose 1-diphosphate: step 5/9. Functionally, IGPS catalyzes the conversion of PRFAR and glutamine to IGP, AICAR and glutamate. The HisF subunit catalyzes the cyclization activity that produces IGP and AICAR from PRFAR using the ammonia provided by the HisH subunit. The polypeptide is Imidazole glycerol phosphate synthase subunit HisF (Cronobacter sakazakii (strain ATCC BAA-894) (Enterobacter sakazakii)).